Reading from the N-terminus, the 790-residue chain is Probable phosphoketolase (790 aa).

Belongs to the XFP family. Requires thiamine diphosphate as cofactor.

The sequence is that of Probable phosphoketolase from Nitrosomonas europaea (strain ATCC 19718 / CIP 103999 / KCTC 2705 / NBRC 14298).